The sequence spans 1291 residues: DNA-directed RNA polymerase subunit beta (1291 aa).

The protein belongs to the RNA polymerase beta chain family. As to quaternary structure, the RNAP catalytic core consists of 2 alpha, 1 beta, 1 beta' and 1 omega subunit. When a sigma factor is associated with the core the holoenzyme is formed, which can initiate transcription.

It carries out the reaction RNA(n) + a ribonucleoside 5'-triphosphate = RNA(n+1) + diphosphate. DNA-dependent RNA polymerase catalyzes the transcription of DNA into RNA using the four ribonucleoside triphosphates as substrates. This Cytophaga hutchinsonii (strain ATCC 33406 / DSM 1761 / CIP 103989 / NBRC 15051 / NCIMB 9469 / D465) protein is DNA-directed RNA polymerase subunit beta.